Here is a 191-residue protein sequence, read N- to C-terminus: Fe/S biogenesis protein NfuA (191 aa).

Positions 149 and 152 each coordinate [4Fe-4S] cluster.

The protein belongs to the NfuA family. In terms of assembly, homodimer. Requires [4Fe-4S] cluster as cofactor.

Its function is as follows. Involved in iron-sulfur cluster biogenesis. Binds a 4Fe-4S cluster, can transfer this cluster to apoproteins, and thereby intervenes in the maturation of Fe/S proteins. Could also act as a scaffold/chaperone for damaged Fe/S proteins. The chain is Fe/S biogenesis protein NfuA from Salmonella arizonae (strain ATCC BAA-731 / CDC346-86 / RSK2980).